Here is a 125-residue protein sequence, read N- to C-terminus: Ribonuclease P protein component (125 aa).

This sequence belongs to the RnpA family. In terms of assembly, consists of a catalytic RNA component (M1 or rnpB) and a protein subunit.

It catalyses the reaction Endonucleolytic cleavage of RNA, removing 5'-extranucleotides from tRNA precursor.. In terms of biological role, RNaseP catalyzes the removal of the 5'-leader sequence from pre-tRNA to produce the mature 5'-terminus. It can also cleave other RNA substrates such as 4.5S RNA. The protein component plays an auxiliary but essential role in vivo by binding to the 5'-leader sequence and broadening the substrate specificity of the ribozyme. The protein is Ribonuclease P protein component of Clostridium perfringens (strain ATCC 13124 / DSM 756 / JCM 1290 / NCIMB 6125 / NCTC 8237 / Type A).